Here is a 359-residue protein sequence, read N- to C-terminus: Putative nucleotidyltransferase MAB21L1 (359 aa).

Residues arginine 23–lysine 24 and tyrosine 63–leucine 66 each bind a ribonucleoside 5'-triphosphate. Positions 73 and 75 each coordinate Mg(2+). Residues lysine 248 and serine 252 to lysine 255 contribute to the a ribonucleoside 5'-triphosphate site.

The protein belongs to the mab-21 family. Monomer. Homodecamer; composed of 2 back to back homopentamers. The protein may exist as monomer in solution and oiligomerizes upon ligand binding.

It localises to the nucleus. Its function is as follows. Putative nucleotidyltransferase required for several aspects of embryonic development including normal development of the eye. It is unclear whether it displays nucleotidyltransferase activity in vivo. Binds single-stranded RNA (ssRNA). This chain is Putative nucleotidyltransferase MAB21L1 (mab21l1), found in Xenopus tropicalis (Western clawed frog).